Reading from the N-terminus, the 804-residue chain is Ribonucleoside-diphosphate reductase large subunit-like protein (804 aa).

It belongs to the ribonucleoside diphosphate reductase large chain family. As to quaternary structure, the genome of human herpesvirus-6 does not code for a ribonucleotide reductase small subunit.

Its subcellular location is the virion. The protein resides in the host cytoplasm. In terms of biological role, does not possess a ribonucleotide reductase activity. Betaherpesviruses probably use another strategy to expand the dNTP pool in a quiescent host cell. This Human herpesvirus 6B (strain Z29) (HHV-6 variant B) protein is Ribonucleoside-diphosphate reductase large subunit-like protein.